A 223-amino-acid polypeptide reads, in one-letter code: PKHD-type hydroxylase CPS_3426 (223 aa).

The Fe2OG dioxygenase domain occupies 77-175 (KSMMPFIISE…RKVALTWIES (99 aa)). Fe cation is bound by residues His96, Asp98, and His156. Arg166 contributes to the 2-oxoglutarate binding site.

Fe(2+) serves as cofactor. Requires L-ascorbate as cofactor.

The chain is PKHD-type hydroxylase CPS_3426 from Colwellia psychrerythraea (strain 34H / ATCC BAA-681) (Vibrio psychroerythus).